A 353-amino-acid chain; its full sequence is tRNA U34 carboxymethyltransferase (353 aa).

Carboxy-S-adenosyl-L-methionine-binding positions include lysine 101, tryptophan 119, lysine 124, glycine 144, 166 to 168, 207 to 208, methionine 227, tyrosine 231, and arginine 346; these read DPS and LE.

Belongs to the class I-like SAM-binding methyltransferase superfamily. CmoB family. In terms of assembly, homotetramer.

It carries out the reaction carboxy-S-adenosyl-L-methionine + 5-hydroxyuridine(34) in tRNA = 5-carboxymethoxyuridine(34) in tRNA + S-adenosyl-L-homocysteine + H(+). In terms of biological role, catalyzes carboxymethyl transfer from carboxy-S-adenosyl-L-methionine (Cx-SAM) to 5-hydroxyuridine (ho5U) to form 5-carboxymethoxyuridine (cmo5U) at position 34 in tRNAs. The sequence is that of tRNA U34 carboxymethyltransferase from Psychrobacter sp. (strain PRwf-1).